Reading from the N-terminus, the 246-residue chain is Acetoacetate decarboxylase (246 aa).

Catalysis depends on lysine 116, which acts as the Schiff-base intermediate with acetoacetate.

The protein belongs to the ADC family.

The catalysed reaction is acetoacetate + H(+) = acetone + CO2. Functionally, catalyzes the conversion of acetoacetate to acetone and carbon dioxide. The chain is Acetoacetate decarboxylase from Burkholderia mallei (strain NCTC 10247).